A 283-amino-acid polypeptide reads, in one-letter code: Pantothenate synthetase (283 aa).

26–33 contacts ATP; it reads MGNLHDGH. The active-site Proton donor is H33. A (R)-pantoate-binding site is contributed by Q57. Q57 is a beta-alanine binding site. Residue 148–151 participates in ATP binding; sequence GKKD. A (R)-pantoate-binding site is contributed by Q154. Residues A177 and 185–188 contribute to the ATP site; that span reads LSSR.

Belongs to the pantothenate synthetase family. As to quaternary structure, homodimer.

It is found in the cytoplasm. The catalysed reaction is (R)-pantoate + beta-alanine + ATP = (R)-pantothenate + AMP + diphosphate + H(+). The protein operates within cofactor biosynthesis; (R)-pantothenate biosynthesis; (R)-pantothenate from (R)-pantoate and beta-alanine: step 1/1. In terms of biological role, catalyzes the condensation of pantoate with beta-alanine in an ATP-dependent reaction via a pantoyl-adenylate intermediate. This chain is Pantothenate synthetase, found in Delftia acidovorans (strain DSM 14801 / SPH-1).